The following is a 175-amino-acid chain: Alkyl hydroperoxide reductase AhpD (175 aa).

The Proton donor role is filled by cysteine 131. The cysteines at positions 131 and 134 are disulfide-linked. Cysteine 134 (cysteine sulfenic acid (-SOH) intermediate) is an active-site residue.

It belongs to the AhpD family.

It carries out the reaction N(6)-[(R)-dihydrolipoyl]-L-lysyl-[lipoyl-carrier protein] + a hydroperoxide = N(6)-[(R)-lipoyl]-L-lysyl-[lipoyl-carrier protein] + an alcohol + H2O. Antioxidant protein with alkyl hydroperoxidase activity. Required for the reduction of the AhpC active site cysteine residues and for the regeneration of the AhpC enzyme activity. The chain is Alkyl hydroperoxide reductase AhpD from Brucella canis (strain ATCC 23365 / NCTC 10854 / RM-666).